A 797-amino-acid chain; its full sequence is LPS-assembly protein LptD (797 aa).

Positions methionine 1–alanine 30 are cleaved as a signal peptide.

This sequence belongs to the LptD family. Component of the lipopolysaccharide transport and assembly complex. Interacts with LptE and LptA.

It localises to the cell outer membrane. Together with LptE, is involved in the assembly of lipopolysaccharide (LPS) at the surface of the outer membrane. In Hahella chejuensis (strain KCTC 2396), this protein is LPS-assembly protein LptD.